A 348-amino-acid chain; its full sequence is Heat-inducible transcription repressor HrcA (348 aa).

This sequence belongs to the HrcA family.

Functionally, negative regulator of class I heat shock genes (grpE-dnaK-dnaJ and groELS operons). Prevents heat-shock induction of these operons. This is Heat-inducible transcription repressor HrcA from Thermomicrobium roseum (strain ATCC 27502 / DSM 5159 / P-2).